We begin with the raw amino-acid sequence, 1165 residues long: Phenyloxazoline synthase MbtB (1165 aa).

Residues 5-78 form the Carrier 1 domain; the sequence is PARSEDIREE…AWAQLVTAGR (74 aa). S39 is subject to O-(pantetheine 4'-phosphoryl)serine. The segment at 77-100 is disordered; it reads GRQDTDSAAPPADSSGDPSGETEP. Residues 97–393 form a condensation/cyclization region; the sequence is ETEPFALAPM…SSLLLDVDLV (297 aa). Positions 578–973 are adenylation; sequence SYAQLRDQAL…RVPGVRTAVA (396 aa). A Carrier 2 domain is found at 1055–1131; it reads AASTPLEGAL…ALAAVLRAAE (77 aa). An O-(pantetheine 4'-phosphoryl)serine modification is found at S1090.

The protein belongs to the ATP-dependent AMP-binding enzyme family. MbtB subfamily. Requires pantetheine 4'-phosphate as cofactor. In terms of processing, 4'-phosphopantetheine is transferred from CoA to a specific serine in each of the two carrier protein domains, leading to their activation from apo to holo forms.

Its pathway is siderophore biosynthesis; mycobactin biosynthesis. Involved in the initial steps of the mycobactin biosynthetic pathway. Putatively couples activated salicylic acid with serine or threonine and cyclizes this precursor to the hydroxyphenyloxazoline ring system present in this class of siderophores. This Mycolicibacterium paratuberculosis (strain ATCC BAA-968 / K-10) (Mycobacterium paratuberculosis) protein is Phenyloxazoline synthase MbtB (mbtB).